Reading from the N-terminus, the 638-residue chain is MPKITLPDGTKKVFEKAVTTLDIAKSIGAGLAKATIAGKVNNVLFDATLPIKNDSKVVIITSRDKEGIEIIRHSFAHLIGHAVKQIYPNIKMAIGPVIEDGFYYDIFSEYRFTPEDLIKIEERINQLIRKDYDVEVLQVSKQEAIKTFKERDEIFKLRIIEEIDEKDSINLYKHEEYIDMCRGPHVPNTRHLRHFKLLKLSGSYWRGDSKNESLQRIYGTAWSKEKDLTNYLKRIEEAEKRDHRKLGKKHSLFHIQEESPGMIFWHPNGWIIYQILEKYIREILRKNEYLEIKTPQAVDKSLWEKSGHWEKFRDDMFTTASENRTYAIKPMNCPCHIQVFNQGLKSYKDLPLRLAEFGSCHRNEPSGALHGLMRVRNFTQDDAHIFCTEEQIQEEVSTFIDLVFEVYNTFGFDEIIIKLSTRPEKRVGSEDIWDKSEEALTEALNNKNLKWELQPGEGAFYGPKIEFSLKDCLNRIWQCGTIQVDFSMPVRLDATFVDINNEKKSPVMLHRAILGSFERFIGILIEQYEAKFPIWLAPTQIILLSITERNIKKCIEFNNLLNTKGYRSKIDIRNEKIGYKIRESTLARIPLIGIVGDKEQELNSVTLRALDGSNLGIYELDNLFKLMNTLIEKKGRVD.

Positions 1 to 61 (MPKITLPDGT…KNDSKVVIIT (61 aa)) constitute a TGS domain. Residues 242–533 (DHRKLGKKHS…LIEQYEAKFP (292 aa)) are catalytic. The Zn(2+) site is built by Cys-333, His-384, and His-510.

It belongs to the class-II aminoacyl-tRNA synthetase family. As to quaternary structure, homodimer. Zn(2+) is required as a cofactor.

Its subcellular location is the cytoplasm. The catalysed reaction is tRNA(Thr) + L-threonine + ATP = L-threonyl-tRNA(Thr) + AMP + diphosphate + H(+). Functionally, catalyzes the attachment of threonine to tRNA(Thr) in a two-step reaction: L-threonine is first activated by ATP to form Thr-AMP and then transferred to the acceptor end of tRNA(Thr). Also edits incorrectly charged L-seryl-tRNA(Thr). In Prochlorococcus marinus (strain MIT 9515), this protein is Threonine--tRNA ligase.